The primary structure comprises 1009 residues: Type VII secretion system accessory factor EsaA (1009 aa).

A helical transmembrane segment spans residues 7–27 (IYALIVTLIIIIAIVSMIFFV). A compositionally biased stretch (basic and acidic residues) spans 680-697 (TFAEEPQEPKIDKGKNDE). The disordered stretch occupies residues 680–707 (TFAEEPQEPKIDKGKNDEFNTMSSNLDK). 5 helical membrane-spanning segments follow: residues 822-842 (ISPT…AYIF), 869-889 (VITS…VGLI), 903-923 (KFIL…TYLL), 928-948 (SIGM…MNNL), and 979-999 (IGLV…LNMF).

It belongs to the EsaA family. As to quaternary structure, homodimer. Interacts with EssB.

It is found in the cell membrane. Functionally, component of the type VII secretion system (Ess). Provides together with EssB and other components such as EssC and EssE a secretion plateform accross the cytoplasmic membrane in the host. The protein is Type VII secretion system accessory factor EsaA of Staphylococcus aureus (strain USA300).